The chain runs to 552 residues: Glutamine--tRNA ligase (552 aa).

The 'HIGH' region motif lies at 34–44; that stretch reads PEPNGYLHIGH. ATP-binding positions include 35 to 37 and 41 to 47; these read EPN and HIGHAKS. L-glutamine contacts are provided by Asp-67 and Tyr-212. ATP contacts are provided by residues Thr-231, 261–262, and 269–271; these read RL and MSK. Residues 268-272 carry the 'KMSKS' region motif; the sequence is IMSKR.

Belongs to the class-I aminoacyl-tRNA synthetase family. In terms of assembly, monomer.

The protein localises to the cytoplasm. It catalyses the reaction tRNA(Gln) + L-glutamine + ATP = L-glutaminyl-tRNA(Gln) + AMP + diphosphate. The sequence is that of Glutamine--tRNA ligase from Aliivibrio salmonicida (strain LFI1238) (Vibrio salmonicida (strain LFI1238)).